The primary structure comprises 577 residues: Arginine--tRNA ligase (577 aa).

Positions 122 to 132 (PNVAKEMHVGH) match the 'HIGH' region motif.

The protein belongs to the class-I aminoacyl-tRNA synthetase family. Monomer.

The protein resides in the cytoplasm. The catalysed reaction is tRNA(Arg) + L-arginine + ATP = L-arginyl-tRNA(Arg) + AMP + diphosphate. The protein is Arginine--tRNA ligase of Klebsiella pneumoniae (strain 342).